Reading from the N-terminus, the 616-residue chain is Proline--tRNA ligase (616 aa).

It belongs to the class-II aminoacyl-tRNA synthetase family. ProS type 1 subfamily. In terms of assembly, homodimer.

The protein localises to the cytoplasm. The catalysed reaction is tRNA(Pro) + L-proline + ATP = L-prolyl-tRNA(Pro) + AMP + diphosphate. Catalyzes the attachment of proline to tRNA(Pro) in a two-step reaction: proline is first activated by ATP to form Pro-AMP and then transferred to the acceptor end of tRNA(Pro). As ProRS can inadvertently accommodate and process non-cognate amino acids such as alanine and cysteine, to avoid such errors it has two additional distinct editing activities against alanine. One activity is designated as 'pretransfer' editing and involves the tRNA(Pro)-independent hydrolysis of activated Ala-AMP. The other activity is designated 'posttransfer' editing and involves deacylation of mischarged Ala-tRNA(Pro). The misacylated Cys-tRNA(Pro) is not edited by ProRS. The sequence is that of Proline--tRNA ligase from Streptococcus mutans serotype c (strain ATCC 700610 / UA159).